The sequence spans 294 residues: 33 kDa chaperonin (294 aa).

2 disulfide bridges follow: Cys236-Cys238 and Cys269-Cys272.

It belongs to the HSP33 family. In terms of processing, under oxidizing conditions two disulfide bonds are formed involving the reactive cysteines. Under reducing conditions zinc is bound to the reactive cysteines and the protein is inactive.

It localises to the cytoplasm. Functionally, redox regulated molecular chaperone. Protects both thermally unfolding and oxidatively damaged proteins from irreversible aggregation. Plays an important role in the bacterial defense system toward oxidative stress. The protein is 33 kDa chaperonin of Desulfotalea psychrophila (strain LSv54 / DSM 12343).